The primary structure comprises 39 residues: Photosystem II reaction center protein Y (39 aa).

The helical transmembrane segment at 4–24 (RVIVVVSPLLIAATWAAINIG) threads the bilayer.

The protein belongs to the PsbY family. As to quaternary structure, PSII is composed of 1 copy each of membrane proteins PsbA, PsbB, PsbC, PsbD, PsbE, PsbF, PsbH, PsbI, PsbJ, PsbK, PsbL, PsbM, PsbT, PsbX, PsbY, PsbZ, Psb30/Ycf12, peripheral proteins PsbO, CyanoQ (PsbQ), PsbU, PsbV and a large number of cofactors. It forms dimeric complexes.

It localises to the cellular thylakoid membrane. Loosely associated component of the core of photosystem II (PSII), it is not always seen in crystals. PSII is a light-driven water plastoquinone oxidoreductase, using light energy to abstract electrons from H(2)O, generating a proton gradient subsequently used for ATP formation. The sequence is that of Photosystem II reaction center protein Y from Synechocystis sp. (strain ATCC 27184 / PCC 6803 / Kazusa).